A 625-amino-acid polypeptide reads, in one-letter code: MMLWKFPVRYDVIVIGGGHAGCEAALASARMGLRTLLLTMNLDTIAKMSCNPAVGGIAKGHIVREIDALGGEMGKVIDVTGIQYRMLNATKGPAVWAPRAQADKLAYQSEMKHRMERVSNLDIKQGTIEDLLIENDHICGVITKEGISYDCQAIVLSSGTFLRGLLHIGETNYSGGRAGDQPSVGMSASLEKYGLKLGRLKTGTPPRINKRSIDFSCTEEQPGDPGVKFSYDNEGIPRLPQVSCYITYTTEETKQIILSNIHRSPMYSGKIKGVGPRYCPSIEDKVVRFSDKERHQIFLEPEGLQTQEVYVNGVSSSLPFDVQLAFIKSIPALRHAEIMRPAYAIEYDYVISGQIDFSLECKKIGGLFLAGQINGTSGYEEAAGQGLMAGINAANKVMGKAPLILKRSEAYIGVMIDDLVTKGLDEPYRMFTSRAEHRLLLRQDNADLRLRRYGYEVGLVDQTRYDRVKEKQRIMEEESERLAKTFKQVSNKGYTLTQLLCRPENTYASLLKEYPDVMQNFGEEINFQIELNLKYAGYIDRQTSEVAKLAHVEKIQIPIGFDFSTVNGLRNEAKQKLNQIAPRHLGQALRISGVSPADISILMIALTRYQEPIEKERLTSDCSEA.

FAD-binding positions include 16 to 21 (GGGHAG), Ile-128, and Ser-183. 275–289 (GPRYCPSIEDKVVRF) serves as a coordination point for NAD(+). Gln-372 is an FAD binding site.

The protein belongs to the MnmG family. Homodimer. Heterotetramer of two MnmE and two MnmG subunits. Requires FAD as cofactor.

The protein resides in the cytoplasm. Functionally, NAD-binding protein involved in the addition of a carboxymethylaminomethyl (cmnm) group at the wobble position (U34) of certain tRNAs, forming tRNA-cmnm(5)s(2)U34. In Protochlamydia amoebophila (strain UWE25), this protein is tRNA uridine 5-carboxymethylaminomethyl modification enzyme MnmG.